A 187-amino-acid chain; its full sequence is Threonylcarbamoyl-AMP synthase (187 aa).

The YrdC-like domain maps to 3 to 187; that stretch reads NSELLKIIWA…LLNGYLYRKR (185 aa).

This sequence belongs to the SUA5 family. TsaC subfamily.

Its subcellular location is the cytoplasm. It catalyses the reaction L-threonine + hydrogencarbonate + ATP = L-threonylcarbamoyladenylate + diphosphate + H2O. Its function is as follows. Required for the formation of a threonylcarbamoyl group on adenosine at position 37 (t(6)A37) in tRNAs that read codons beginning with adenine. Catalyzes the conversion of L-threonine, HCO(3)(-)/CO(2) and ATP to give threonylcarbamoyl-AMP (TC-AMP) as the acyladenylate intermediate, with the release of diphosphate. The polypeptide is Threonylcarbamoyl-AMP synthase (Riesia pediculicola (strain USDA)).